A 232-amino-acid polypeptide reads, in one-letter code: Ubiquinone biosynthesis O-methyltransferase (232 aa).

Residues arginine 36, glycine 55, aspartate 76, and methionine 120 each contribute to the S-adenosyl-L-methionine site.

The protein belongs to the methyltransferase superfamily. UbiG/COQ3 family.

The enzyme catalyses a 3-demethylubiquinol + S-adenosyl-L-methionine = a ubiquinol + S-adenosyl-L-homocysteine + H(+). It catalyses the reaction a 3-(all-trans-polyprenyl)benzene-1,2-diol + S-adenosyl-L-methionine = a 2-methoxy-6-(all-trans-polyprenyl)phenol + S-adenosyl-L-homocysteine + H(+). It participates in cofactor biosynthesis; ubiquinone biosynthesis. In terms of biological role, O-methyltransferase that catalyzes the 2 O-methylation steps in the ubiquinone biosynthetic pathway. This Burkholderia mallei (strain ATCC 23344) protein is Ubiquinone biosynthesis O-methyltransferase.